A 449-amino-acid chain; its full sequence is Probable glycosyltransferase 5 (449 aa).

Positions 1 to 14 (MMEKHGGKVTSDRR) are enriched in basic and acidic residues. The tract at residues 1-24 (MMEKHGGKVTSDRRAGRRQHGQRC) is disordered. At 1 to 28 (MMEKHGGKVTSDRRAGRRQHGQRCSASD) the chain is on the cytoplasmic side. Residues 29–49 (AAPLVVVVILIVAALFLILGP) form a helical; Signal-anchor for type II membrane protein membrane-spanning segment. The Lumenal portion of the chain corresponds to 50–449 (TGSSSFTVPR…HPTFRAARPT (400 aa)). Positions 74–109 (APPPPPPPAQMQAGANASSEEDSGLPPPRQLTDPPY) are disordered. Residues asparagine 89, asparagine 413, and asparagine 422 are each glycosylated (N-linked (GlcNAc...) asparagine).

The protein belongs to the glycosyltransferase 34 family.

It localises to the golgi apparatus membrane. Functionally, probable glycosyltransferase that may be involved in the biosynthesis of xyloglucan. The sequence is that of Probable glycosyltransferase 5 from Oryza sativa subsp. japonica (Rice).